The sequence spans 337 residues: Hsp90 co-chaperone Cdc37-like 1 (337 aa).

Residues 1–11 (MEQPWPPPGPW) show a composition bias toward pro residues. The segment at 1-40 (MEQPWPPPGPWSLPRAEGEAEEESDFDVFPSSPRCPQLPG) is disordered. The tract at residues 2 to 171 (EQPWPPPGPW…YEQKIRHFGM (170 aa)) is self-association. Phosphoserine is present on residues Ser32 and Ser88. Residues 84–122 (HNSESLDQEHAKAQTAVSELRQREEEWRQKEEALVQREK) are a coiled coil. The segment at 147-277 (KDTEDEDKSE…SRVRLYSQSQ (131 aa)) is self-association and interaction with Hsp90. The interval 267-337 (KSRVRLYSQS…DDEPKMMDTV (71 aa)) is interaction with Hsp70. Residues 278-337 (SFQPMTVQNHVPHSGVGSIGLLESLPQNPDYLQYSISTALCSLNSVVHKEDDEPKMMDTV) are required for interaction with STIP1.

Belongs to the CDC37 family. As to quaternary structure, self-associates. Forms complexes with Hsp70 and Hsp90. Interacts with CDC37, FKBP4, PPID and STIP1. Expressed in brain, heart, kidney, liver, placenta and skeletal muscle.

The protein localises to the cytoplasm. Functionally, co-chaperone that binds to numerous proteins and promotes their interaction with Hsp70 and Hsp90. In Homo sapiens (Human), this protein is Hsp90 co-chaperone Cdc37-like 1 (CDC37L1).